We begin with the raw amino-acid sequence, 193 residues long: dTTP/UTP pyrophosphatase (193 aa).

Residue D73 is the Proton acceptor of the active site.

The protein belongs to the Maf family. YhdE subfamily. Requires a divalent metal cation as cofactor.

It is found in the cytoplasm. It carries out the reaction dTTP + H2O = dTMP + diphosphate + H(+). The catalysed reaction is UTP + H2O = UMP + diphosphate + H(+). In terms of biological role, nucleoside triphosphate pyrophosphatase that hydrolyzes dTTP and UTP. May have a dual role in cell division arrest and in preventing the incorporation of modified nucleotides into cellular nucleic acids. This chain is dTTP/UTP pyrophosphatase, found in Caulobacter vibrioides (strain ATCC 19089 / CIP 103742 / CB 15) (Caulobacter crescentus).